The primary structure comprises 119 residues: Holo-[acyl-carrier-protein] synthase (119 aa).

Mg(2+)-binding residues include D6 and E51.

Belongs to the P-Pant transferase superfamily. AcpS family. Mg(2+) serves as cofactor.

The protein resides in the cytoplasm. It catalyses the reaction apo-[ACP] + CoA = holo-[ACP] + adenosine 3',5'-bisphosphate + H(+). In terms of biological role, transfers the 4'-phosphopantetheine moiety from coenzyme A to a Ser of acyl-carrier-protein. This Sulfurovum sp. (strain NBC37-1) protein is Holo-[acyl-carrier-protein] synthase.